Reading from the N-terminus, the 297-residue chain is MLYQQIAQNKRKTIFLILAFFFLLTAIGAAAGYLLVESYQFGIVLALILGSIYAFSMIFQSTNVVMGMNKAREITVDQAPDFFHIVEDMAMVAQIPMPKVYIIDDPSLNAFATGSSPENAAVAATSGLLQVMNREELEGVIGHEISHIRNYDIRISTIAVALASAITLIASMGSRMMWYGGGRQRQNDRDNSSLGIVFLIFSLLSLILAPLIASMVQLAISRQREYLADASSVELTRNPEGMIRALEKLSQSQPMSHPVDDASSALYINEPQKRESLSSLFSTHPPIADRIERLRHM.

2 helical membrane-spanning segments follow: residues 14-34 and 39-59; these read IFLI…AGYL and YQFG…SMIF. His143 provides a ligand contact to Zn(2+). Glu144 is a catalytic residue. Residue His147 coordinates Zn(2+). 2 helical membrane-spanning segments follow: residues 153–173 and 196–216; these read IRIS…ASMG and IVFL…ASMV. A Zn(2+)-binding site is contributed by Glu225.

It belongs to the peptidase M48B family. Zn(2+) is required as a cofactor.

It localises to the cell membrane. The protein is Protease HtpX homolog of Streptococcus uberis (strain ATCC BAA-854 / 0140J).